The chain runs to 328 residues: Flap endonuclease 1 (328 aa).

The interval 1–98 (MGVKLRDVVS…ETVSRRADIR (98 aa)) is N-domain. Mg(2+) is bound by residues aspartate 27, aspartate 80, glutamate 152, glutamate 154, aspartate 173, aspartate 175, and aspartate 226. The interval 116–247 (RAKKYAVRSS…RGLKLIREKG (132 aa)) is I-domain. Positions 320-328 (TQKSLEDWF) are interaction with PCNA.

This sequence belongs to the XPG/RAD2 endonuclease family. FEN1 subfamily. Interacts with PCNA. PCNA stimulates the nuclease activity without altering cleavage specificity. The cofactor is Mg(2+).

Its function is as follows. Structure-specific nuclease with 5'-flap endonuclease and 5'-3' exonuclease activities involved in DNA replication and repair. During DNA replication, cleaves the 5'-overhanging flap structure that is generated by displacement synthesis when DNA polymerase encounters the 5'-end of a downstream Okazaki fragment. Binds the unpaired 3'-DNA end and kinks the DNA to facilitate 5' cleavage specificity. Cleaves one nucleotide into the double-stranded DNA from the junction in flap DNA, leaving a nick for ligation. Also involved in the base excision repair (BER) pathway. Acts as a genome stabilization factor that prevents flaps from equilibrating into structures that lead to duplications and deletions. Also possesses 5'-3' exonuclease activity on nicked or gapped double-stranded DNA. This is Flap endonuclease 1 from Methanothermobacter thermautotrophicus (strain ATCC 29096 / DSM 1053 / JCM 10044 / NBRC 100330 / Delta H) (Methanobacterium thermoautotrophicum).